The chain runs to 410 residues: Transcription termination factor, mitochondrial (410 aa).

The transit peptide at 1–44 (MIRSLLRSFETALKLHAGLNMHPMHCSRRLLFSQYENRASPSRL) directs the protein to the mitochondrion.

It belongs to the mTERF family.

Its subcellular location is the mitochondrion. Its function is as follows. Transcription termination factor. Binds promoter DNA and regulates mitochondrial replication and transcription. Transcription termination activity may be polarized with highest termination activity occurring when its DNA-binding site is positioned in the reverse orientation with respect to the incoming RNA polymerase. Required for normal topology and maintenance of mitochondrial DNA (mtDNA) levels. Regulates mtDNA replication by promoting replication pausing, possibly by acting as a natural barrier to replication fork progression. Its function in replication pausing prevents unregulated replication that may occur for example by collisions between the machineries of DNA replication and transcription during mtDNA synthesis. This ensures the incorporation of RNA transcripts into replication intermediates at the replication fork and allow for proper fork progression. Shares mtDNA binding sites with the mitochondrial termination factor mTerf5 and thereby may antagonize mTerf5 function during replication to regulate pausing. Likely to function downstream of Dref which activates genes involved in mtDNA replication and maintenance. The chain is Transcription termination factor, mitochondrial from Drosophila melanogaster (Fruit fly).